Consider the following 698-residue polypeptide: Elongation factor G 2 (698 aa).

The tr-type G domain maps to 8-290; the sequence is ERYRNIGIMA…AVVDYLPSPV (283 aa). GTP is bound by residues 17–24, 88–92, and 142–145; these read AHIDAGKT, DTPGH, and NKMD.

Belongs to the TRAFAC class translation factor GTPase superfamily. Classic translation factor GTPase family. EF-G/EF-2 subfamily.

Its subcellular location is the cytoplasm. In terms of biological role, catalyzes the GTP-dependent ribosomal translocation step during translation elongation. During this step, the ribosome changes from the pre-translocational (PRE) to the post-translocational (POST) state as the newly formed A-site-bound peptidyl-tRNA and P-site-bound deacylated tRNA move to the P and E sites, respectively. Catalyzes the coordinated movement of the two tRNA molecules, the mRNA and conformational changes in the ribosome. The chain is Elongation factor G 2 from Methylococcus capsulatus (strain ATCC 33009 / NCIMB 11132 / Bath).